A 1050-amino-acid polypeptide reads, in one-letter code: MALYDEDLLKNPFYLALQKCRPDLCSKVAQIHGIVLVPCKGSLSSSIQSTCQFESYILIPVEEHFQTLNGKDVFIQGNRIKLGAGFACLLSVPILFEETFYNEKEESFSILCIAHPLEKRESSEEPLAPSDPFSLKTIEDVREFLGRHSERFDRNIASFHRTFRECERKSLRHHIDSANALYTKCLQQLLRDSHLKMLAKQEAQMNLMKQAVEIYVHHEIYNLIFKYVGTMEASEDAAFNKITRSLQDLQQKDIGVKPEFSFNIPRAKRELAQLNKCTSPQQKLVCLRKVVQLITQSPSQRVNLETMCADDLLSVLLYLLVKTEIPNWMANLSYIKNFRFSSLAKDELGYCLTSFEAAIEYIRQGSLSAKPPESEGFGDRLFLKQRMSLLSQMTSSPTDCLFKHIASGNQKEVERLLSQEDHDKDTVQKMCHPLCFCDDCEKLVSGRLNDPSVVTPFSRDDRGHTPLHVAAVCGQASLIDLLVSKGAMVNATDYHGATPLHLACQKGYQSVTLLLLHYKASAEVQDNNGNTPLHLACTYGHEDCVKALVYYDVESCRLDIGNEKGDTPLHIAARWGYQGVIETLLQNGASTEIQNRLKETPLKCALNSKILSVMEAYHLSFERRQKSSEAPVQSPQRSVDSISQESSTSSFSSMSASSRQEETKKDYREVEKLLRAVADGDLEMVRYLLEWTEEDLEDAEDTVSAADPEFCHPLCQCPKCAPAQKRLAKVPASGLGVNVTSQDGSSPLHVAALHGRADLIPLLLKHGANAGARNADQAVPLHLACQQGHFQVVKCLLDSNAKPNKKDLSGNTPLIYACSGGHHELVALLLQHGASINASNNKGNTALHEAVIEKHVFVVELLLLHGASVQVLNKRQRTAVDCAEQNSKIMELLQVVPSCVASLDDVAETDRKEYVTVKIRKKWNSKLYDLPDEPFTRQFYFVHSAGQFKGKTSREIMARDRSVPNLTEGSLHEPGRQSVTLRQNNLPAQSGSHAAEKGNSDWPERPGLTQTGPGHRRMLRRHTVEDAVVSQGPEAAGPLSTPQEVSASRS.

Positions 1–372 are sufficient for GEF activity towards RAB21; that stretch reads MALYDEDLLK…RQGSLSAKPP (372 aa). Residues 233–371 enclose the VPS9 domain; that stretch reads ASEDAAFNKI…IRQGSLSAKP (139 aa). ANK repeat units lie at residues 396–426, 462–491, 495–524, 528–560, 564–593, and 597–627; these read SPTD…DKDT, RGHT…MVNA, HGAT…SAEV, NGNT…RLDI, KGDT…STEI, and LKET…RQKS. Residues 396–460 are sufficient for interaction with VPS29; it reads SPTDCLFKHI…PSVVTPFSRD (65 aa). The tract at residues 451–600 is interaction with RAB38; it reads PSVVTPFSRD…TEIQNRLKET (150 aa). Residues 451–730 form an interaction with RAB32 region; the sequence is PSVVTPFSRD…APAQKRLAKV (280 aa). The interval 625–665 is disordered; that stretch reads QKSSEAPVQSPQRSVDSISQESSTSSFSSMSASSRQEETKK. Positions 628–637 are enriched in polar residues; that stretch reads SEAPVQSPQR. Residues 638 to 658 show a composition bias toward low complexity; it reads SVDSISQESSTSSFSSMSASS. Residues 658 to 707 are required for interaction with VAMP7; that stretch reads SRQEETKKDYREVEKLLRAVADGDLEMVRYLLEWTEEDLEDAEDTVSAAD. 5 ANK repeats span residues 668–698, 743–772, 776–805, 809–838, and 842–871; these read REVE…DLED, DGSS…NAGA, DQAV…KPNK, SGNT…SINA, and KGNT…SVQV. Residues 692-746 form a sufficient for interaction with VPS29 region; it reads TEEDLEDAEDTVSAADPEFCHPLCQCPKCAPAQKRLAKVPASGLGVNVTSQDGSS. A phosphoserine mark is found at Ser962 and Ser970. Residues 987 to 1050 form a disordered region; sequence PAQSGSHAAE…TPQEVSASRS (64 aa). The segment covering 994–1004 has biased composition (basic and acidic residues); that stretch reads AAEKGNSDWPE. Thr1023 is modified (phosphothreonine). Residues 1040-1050 are compositionally biased toward polar residues; the sequence is STPQEVSASRS.

As to quaternary structure, interacts with RAB21 (GDP-bound form), VPS29, RAB32 (GTP-bound form), RAB38 (GTP-bound form), VAMP7, KIF5A, KIF5C, GOLGA4. Interacts with low affinity with RAB5. ANKRD27:RAB32 heterodimers can homodimerize to form tetramers. Can interact with RAB38 or RAB32, VPS29 and VAMP7 simultaneously. A decreased interaction with RAB32 seen in the presence of SGSM2.

The protein resides in the early endosome. It is found in the late endosome. It localises to the cytoplasmic vesicle membrane. The protein localises to the lysosome. Its subcellular location is the cell membrane. The protein resides in the melanosome. Its function is as follows. May be a guanine exchange factor (GEF) for Rab21, Rab32 and Rab38 and regulate endosome dynamics. May regulate the participation of VAMP7 in membrane fusion events; in vitro inhibits VAMP7-mediated SNARE complex formation by trapping VAMP7 in a closed, fusogenically inactive conformation. Involved in peripheral melanosomal distribution of TYRP1 in melanocytes; the function, which probably is implicating vesicle-trafficking, includes cooperation with Rab32, Rab38 and VAMP7. Involved in the regulation of neurite growth; the function seems to require its GEF activity, probably towards Rab21, and VAMP7 but not Rab32/38. Proposed to be involved in Golgi sorting of VAMP7 and transport of VAMP7 vesicles to the cell surface; the function seems to implicate kinesin heavy chain isoform 5 proteins, GOLGA4, RAB21 and MACF1. Required for the colocalization of VAMP7 and Rab21, probably on TGN sites. Involved in GLUT1 endosome-to-plasma membrane trafficking; the function is dependent of association with VPS29. Regulates the proper trafficking of melanogenic enzymes TYR, TYRP1 and DCT/TYRP2 to melanosomes in melanocytes. The sequence is that of Ankyrin repeat domain-containing protein 27 (ANKRD27) from Homo sapiens (Human).